A 335-amino-acid polypeptide reads, in one-letter code: Methionine import ATP-binding protein MetN 1 (335 aa).

In terms of domain architecture, ABC transporter spans 2–242; it reads IEFQNVHKTY…PKHPTTKRFV (241 aa). Position 38 to 45 (38 to 45) interacts with ATP; it reads GHSGAGKS.

The protein belongs to the ABC transporter superfamily. Methionine importer (TC 3.A.1.24) family. As to quaternary structure, the complex is composed of two ATP-binding proteins (MetN), two transmembrane proteins (MetI) and a solute-binding protein (MetQ).

Its subcellular location is the cell inner membrane. It carries out the reaction L-methionine(out) + ATP + H2O = L-methionine(in) + ADP + phosphate + H(+). It catalyses the reaction D-methionine(out) + ATP + H2O = D-methionine(in) + ADP + phosphate + H(+). Functionally, part of the ABC transporter complex MetNIQ involved in methionine import. Responsible for energy coupling to the transport system. This is Methionine import ATP-binding protein MetN 1 from Pseudomonas fluorescens (strain Pf0-1).